Here is a 245-residue protein sequence, read N- to C-terminus: 6-carboxyhexanoate--CoA ligase (245 aa).

The protein belongs to the BioW family. Homodimer. The cofactor is Mg(2+).

It catalyses the reaction heptanedioate + ATP + CoA = 6-carboxyhexanoyl-CoA + AMP + diphosphate. It participates in metabolic intermediate metabolism; pimeloyl-CoA biosynthesis; pimeloyl-CoA from pimelate: step 1/1. Catalyzes the transformation of pimelate into pimeloyl-CoA with concomitant hydrolysis of ATP to AMP. In Methanococcus vannielii (strain ATCC 35089 / DSM 1224 / JCM 13029 / OCM 148 / SB), this protein is 6-carboxyhexanoate--CoA ligase.